We begin with the raw amino-acid sequence, 170 residues long: Endoribonuclease YbeY (170 aa).

The Zn(2+) site is built by histidine 128, histidine 132, and histidine 138.

It belongs to the endoribonuclease YbeY family. Zn(2+) serves as cofactor.

It localises to the cytoplasm. Its function is as follows. Single strand-specific metallo-endoribonuclease involved in late-stage 70S ribosome quality control and in maturation of the 3' terminus of the 16S rRNA. The polypeptide is Endoribonuclease YbeY (Ruegeria sp. (strain TM1040) (Silicibacter sp.)).